The sequence spans 565 residues: Sulfite reductase [NADPH] hemoprotein beta-component (565 aa).

[4Fe-4S] cluster contacts are provided by Cys-429, Cys-435, Cys-474, and Cys-478. Residue Cys-478 coordinates siroheme.

The protein belongs to the nitrite and sulfite reductase 4Fe-4S domain family. In terms of assembly, alpha(8)-beta(8). The alpha component is a flavoprotein, the beta component is a hemoprotein. Requires siroheme as cofactor. It depends on [4Fe-4S] cluster as a cofactor.

The catalysed reaction is hydrogen sulfide + 3 NADP(+) + 3 H2O = sulfite + 3 NADPH + 4 H(+). The protein operates within sulfur metabolism; hydrogen sulfide biosynthesis; hydrogen sulfide from sulfite (NADPH route): step 1/1. Its function is as follows. Component of the sulfite reductase complex that catalyzes the 6-electron reduction of sulfite to sulfide. This is one of several activities required for the biosynthesis of L-cysteine from sulfate. The protein is Sulfite reductase [NADPH] hemoprotein beta-component of Shewanella sp. (strain MR-4).